The chain runs to 654 residues: tRNA 5-methylaminomethyl-2-thiouridine biosynthesis bifunctional protein MnmC (654 aa).

The segment at 1 to 236 (MSTLLQHAQI…KWEVMSGAYV (236 aa)) is tRNA (mnm(5)s(2)U34)-methyltransferase. The FAD-dependent cmnm(5)s(2)U34 oxidoreductase stretch occupies residues 262 to 654 (IGAGLAGSTT…FALRRLIRGK (393 aa)).

This sequence in the N-terminal section; belongs to the methyltransferase superfamily. tRNA (mnm(5)s(2)U34)-methyltransferase family. It in the C-terminal section; belongs to the DAO family. The cofactor is FAD.

Its subcellular location is the cytoplasm. The enzyme catalyses 5-aminomethyl-2-thiouridine(34) in tRNA + S-adenosyl-L-methionine = 5-methylaminomethyl-2-thiouridine(34) in tRNA + S-adenosyl-L-homocysteine + H(+). Catalyzes the last two steps in the biosynthesis of 5-methylaminomethyl-2-thiouridine (mnm(5)s(2)U) at the wobble position (U34) in tRNA. Catalyzes the FAD-dependent demodification of cmnm(5)s(2)U34 to nm(5)s(2)U34, followed by the transfer of a methyl group from S-adenosyl-L-methionine to nm(5)s(2)U34, to form mnm(5)s(2)U34. This is tRNA 5-methylaminomethyl-2-thiouridine biosynthesis bifunctional protein MnmC from Pseudomonas putida (strain GB-1).